Here is a 95-residue protein sequence, read N- to C-terminus: Small ribosomal subunit protein bS6 (95 aa).

This sequence belongs to the bacterial ribosomal protein bS6 family.

Its function is as follows. Binds together with bS18 to 16S ribosomal RNA. The polypeptide is Small ribosomal subunit protein bS6 (Geobacillus kaustophilus (strain HTA426)).